The primary structure comprises 88 residues: Small ribosomal subunit protein bS20 (88 aa).

Positions 1–26 are disordered; the sequence is MANTAQARKRARQNTKRRQNSASQRS. The span at 7-19 shows a compositional bias: basic residues; the sequence is ARKRARQNTKRRQ.

It belongs to the bacterial ribosomal protein bS20 family.

Its function is as follows. Binds directly to 16S ribosomal RNA. The sequence is that of Small ribosomal subunit protein bS20 from Psychrobacter arcticus (strain DSM 17307 / VKM B-2377 / 273-4).